A 224-amino-acid chain; its full sequence is Thiamine-phosphate synthase (224 aa).

4-amino-2-methyl-5-(diphosphooxymethyl)pyrimidine is bound by residues 44 to 48 (QFREK) and Asn79. 2 residues coordinate Mg(2+): Asp80 and Asp99. 4-amino-2-methyl-5-(diphosphooxymethyl)pyrimidine is bound at residue Ser117. 143–145 (TET) is a binding site for 2-[(2R,5Z)-2-carboxy-4-methylthiazol-5(2H)-ylidene]ethyl phosphate. Position 146 (Lys146) interacts with 4-amino-2-methyl-5-(diphosphooxymethyl)pyrimidine. Residues Gly175 and 195–196 (IS) each bind 2-[(2R,5Z)-2-carboxy-4-methylthiazol-5(2H)-ylidene]ethyl phosphate.

The protein belongs to the thiamine-phosphate synthase family. Mg(2+) is required as a cofactor.

The catalysed reaction is 2-[(2R,5Z)-2-carboxy-4-methylthiazol-5(2H)-ylidene]ethyl phosphate + 4-amino-2-methyl-5-(diphosphooxymethyl)pyrimidine + 2 H(+) = thiamine phosphate + CO2 + diphosphate. It carries out the reaction 2-(2-carboxy-4-methylthiazol-5-yl)ethyl phosphate + 4-amino-2-methyl-5-(diphosphooxymethyl)pyrimidine + 2 H(+) = thiamine phosphate + CO2 + diphosphate. The enzyme catalyses 4-methyl-5-(2-phosphooxyethyl)-thiazole + 4-amino-2-methyl-5-(diphosphooxymethyl)pyrimidine + H(+) = thiamine phosphate + diphosphate. It functions in the pathway cofactor biosynthesis; thiamine diphosphate biosynthesis; thiamine phosphate from 4-amino-2-methyl-5-diphosphomethylpyrimidine and 4-methyl-5-(2-phosphoethyl)-thiazole: step 1/1. Condenses 4-methyl-5-(beta-hydroxyethyl)thiazole monophosphate (THZ-P) and 2-methyl-4-amino-5-hydroxymethyl pyrimidine pyrophosphate (HMP-PP) to form thiamine monophosphate (TMP). This is Thiamine-phosphate synthase from Bacillus licheniformis (strain ATCC 14580 / DSM 13 / JCM 2505 / CCUG 7422 / NBRC 12200 / NCIMB 9375 / NCTC 10341 / NRRL NRS-1264 / Gibson 46).